A 348-amino-acid chain; its full sequence is D-alanine--D-alanine ligase (348 aa).

One can recognise an ATP-grasp domain in the interval 132–334 (KRVLESIGIP…YPDLIEELVT (203 aa)). 162-217 (LARLTFPIFVKPANMGSSVGISKAQTKVELRKAIQLALTYDSRVLIEQGVVAREIE) is a binding site for ATP. Mg(2+)-binding residues include D288, E301, and N303.

The protein belongs to the D-alanine--D-alanine ligase family. The cofactor is Mg(2+). Mn(2+) is required as a cofactor.

It localises to the cytoplasm. The catalysed reaction is 2 D-alanine + ATP = D-alanyl-D-alanine + ADP + phosphate + H(+). The protein operates within cell wall biogenesis; peptidoglycan biosynthesis. Functionally, cell wall formation. The sequence is that of D-alanine--D-alanine ligase from Streptococcus pyogenes serotype M18 (strain MGAS8232).